Here is a 384-residue protein sequence, read N- to C-terminus: S-adenosylmethionine synthase (384 aa).

Residue His-15 participates in ATP binding. Asp-17 is a Mg(2+) binding site. Residue Glu-43 coordinates K(+). L-methionine is bound by residues Glu-56 and Gln-99. The tract at residues 99–109 is flexible loop; sequence QSPDINQGVDR. ATP contacts are provided by residues 164 to 166, 230 to 231, Asp-239, 245 to 246, Ala-262, and Lys-266; these read DAK, RF, and RK. Asp-239 serves as a coordination point for L-methionine. L-methionine is bound at residue Lys-270.

Belongs to the AdoMet synthase family. In terms of assembly, homotetramer; dimer of dimers. Requires Mg(2+) as cofactor. K(+) serves as cofactor.

It is found in the cytoplasm. It carries out the reaction L-methionine + ATP + H2O = S-adenosyl-L-methionine + phosphate + diphosphate. It participates in amino-acid biosynthesis; S-adenosyl-L-methionine biosynthesis; S-adenosyl-L-methionine from L-methionine: step 1/1. Catalyzes the formation of S-adenosylmethionine (AdoMet) from methionine and ATP. The overall synthetic reaction is composed of two sequential steps, AdoMet formation and the subsequent tripolyphosphate hydrolysis which occurs prior to release of AdoMet from the enzyme. The sequence is that of S-adenosylmethionine synthase from Salmonella choleraesuis (strain SC-B67).